The following is a 54-amino-acid chain: Hemolytic toxin (54 aa).

The tract at residues Ala-3–Ala-12 is plays an important role in the hemolytic activity. Residues Gly-11–Ser-30 are N-terminal region.

Belongs to the actinoporin family. Sea anemone subfamily. In terms of assembly, octamer or nonamer in membranes. Monomer in the soluble state.

It localises to the secreted. The protein localises to the nematocyst. It is found in the target cell membrane. Functionally, pore-forming protein that forms cations-selective hydrophilic pores of around 1 nm and causes cytolysis. Pore formation is a multi-step process that involves specific recognition of membrane sphingomyelin (but neither cholesterol nor phosphatidylcholine) using aromatic rich region and adjacent phosphocholine (POC) binding site, firm binding to the membrane (mainly driven by hydrophobic interactions) accompanied by the transfer of the N-terminal region to the lipid-water interface and finally pore formation after oligomerization of monomers. The polypeptide is Hemolytic toxin (Heteractis magnifica (Magnificent sea anemone)).